Reading from the N-terminus, the 338-residue chain is MRLYELSFAQIEDFFYKLAEVKDIIKDSGLMEFLPELKKLDSTIQTGTTRVKHAFPIFQKGGVVMDITNVQQAQIAEEAGAVAVMVLDKLPYDVRKSGGVARMADPKIIGEVMNSITIPVMAKVRIGHYYEAKLLEALGVDMIDESEVLTPADEEHHINKWEFSVPFVNGARNLGEALRRTAEGASMIRTKGEAGTGNVSEAVKHMKIINSEIRSLISMSEEDRVKKAREYQVPYQLVELTAKIKRLPIVNFAAGGIATPADAALMMWLGADGLFVGSGIFKSQDPDERAKAVVLAAACWEYPEIVLEAQKMISEQKSMMGIDIKSLKPEELLQVRGL.

A D-ribose 5-phosphate-binding site is contributed by aspartate 66. Lysine 123 (schiff-base intermediate with D-ribose 5-phosphate) is an active-site residue. Residue glycine 195 participates in D-ribose 5-phosphate binding. Residue lysine 207 coordinates D-glyceraldehyde 3-phosphate. D-ribose 5-phosphate contacts are provided by residues glycine 256 and 277–278 (GS).

This sequence belongs to the PdxS/SNZ family. As to quaternary structure, in the presence of PdxT, forms a dodecamer of heterodimers.

It carries out the reaction aldehydo-D-ribose 5-phosphate + D-glyceraldehyde 3-phosphate + L-glutamine = pyridoxal 5'-phosphate + L-glutamate + phosphate + 3 H2O + H(+). The protein operates within cofactor biosynthesis; pyridoxal 5'-phosphate biosynthesis. Its function is as follows. Catalyzes the formation of pyridoxal 5'-phosphate from ribose 5-phosphate (RBP), glyceraldehyde 3-phosphate (G3P) and ammonia. The ammonia is provided by the PdxT subunit. Can also use ribulose 5-phosphate and dihydroxyacetone phosphate as substrates, resulting from enzyme-catalyzed isomerization of RBP and G3P, respectively. The sequence is that of Pyridoxal 5'-phosphate synthase subunit PdxS from Saccharolobus islandicus (strain L.S.2.15 / Lassen #1) (Sulfolobus islandicus).